Reading from the N-terminus, the 480-residue chain is Transposase for transposon Tn552 (480 aa).

Residues 36–55 (LSSISKSKGIALSTLYRWNK) constitute a DNA-binding region (H-T-H motif). In terms of domain architecture, Integrase catalytic spans 155–341 (ESSRPNEIWQ…TPINRWNSNH (187 aa)). The tract at residues 438 to 480 (RKHLKQNIASPSTTDLIKEEKSYGYSPQETTKNVKKLKRYRND) is disordered. Positions 470-480 (NVKKLKRYRND) are enriched in basic residues.

In Staphylococcus aureus, this protein is Transposase for transposon Tn552.